The following is a 243-amino-acid chain: Urease accessory protein UreF 2 (243 aa).

It belongs to the UreF family. In terms of assembly, ureD, UreF and UreG form a complex that acts as a GTP-hydrolysis-dependent molecular chaperone, activating the urease apoprotein by helping to assemble the nickel containing metallocenter of UreC. The UreE protein probably delivers the nickel.

It is found in the cytoplasm. Functionally, required for maturation of urease via the functional incorporation of the urease nickel metallocenter. This is Urease accessory protein UreF 2 from Brucella suis (strain ATCC 23445 / NCTC 10510).